The chain runs to 319 residues: Ornithine carbamoyltransferase (319 aa).

Residues 55–58 (STRT), Gln-82, Arg-106, and 133–136 (HPCQ) contribute to the carbamoyl phosphate site. L-ornithine contacts are provided by residues Asn-171, Asp-234, and 238-239 (SM). Residues 274-275 (CL) and Arg-302 each bind carbamoyl phosphate.

Belongs to the aspartate/ornithine carbamoyltransferase superfamily. OTCase family.

It is found in the cytoplasm. The enzyme catalyses carbamoyl phosphate + L-ornithine = L-citrulline + phosphate + H(+). Its pathway is amino-acid biosynthesis; L-arginine biosynthesis; L-arginine from L-ornithine and carbamoyl phosphate: step 1/3. In terms of biological role, reversibly catalyzes the transfer of the carbamoyl group from carbamoyl phosphate (CP) to the N(epsilon) atom of ornithine (ORN) to produce L-citrulline. The sequence is that of Ornithine carbamoyltransferase from Corynebacterium diphtheriae (strain ATCC 700971 / NCTC 13129 / Biotype gravis).